Here is a 306-residue protein sequence, read N- to C-terminus: MTNLNEKQLITEIVGLARSQGLTVHSENAQLNETGMDFQVVFAKDDTGMPWVLRKPRRSDVVERASAEGITLAFLRANLTADVPDWRIHTPELIAYPMLKGTPAAGIDLEQKQYVWNMDHQPPSDDFVRTLADILAELHGTDQISAGQSGIEVIRPEDFRQMTADSMVDVKNKLGVSTTLWERWQKWVDDDAYWPGFSSLIHGDLHPPHILIDQNGRVTGLLDWTEAKVADPAKDFVLYQTIFGEKETARLLEYYDQAGGRIWAKMQEHISEMQAAYPVEIAKLALQTQQEEHINMALEALGVTSD.

Residue Asp-204 is the Proton acceptor of the active site.

The protein belongs to the aminoglycoside phosphotransferase family.

This is an uncharacterized protein from Bacillus subtilis (strain 168).